The chain runs to 462 residues: Glycoprotein endo-alpha-1,2-mannosidase (462 aa).

The Cytoplasmic portion of the chain corresponds to 1–9 (MAKFRRRTC). A helical; Signal-anchor for type II membrane protein transmembrane segment spans residues 10-30 (ILLSLFILFIFSLMMGLKMLW). Over 31-462 (PNAASFGPPF…YALDQQQPAS (432 aa)) the chain is Lumenal. A catalytic region spans residues 60–462 (DFQRSDRINM…YALDQQQPAS (403 aa)).

This sequence belongs to the glycosyl hydrolase 99 family. In terms of processing, undergoes proteolytic cleavage in the C-terminal region.

The protein resides in the golgi apparatus membrane. The catalysed reaction is N-{alpha-Glc-(1-&gt;3)-alpha-Man-(1-&gt;2)-alpha-Man-(1-&gt;2)-alpha-Man-(1-&gt;3)-[alpha-Man-(1-&gt;2)-alpha-Man-(1-&gt;3)-[alpha-Man-(1-&gt;2)-alpha-Man-(1-&gt;6)]-alpha-Man-(1-&gt;6)]-beta-Man-(1-&gt;4)-beta-GlcNAc-(1-&gt;4)-beta-GlcNAc}-L-asparaginyl-[protein] + H2O = alpha-D-glucosyl-(1-&gt;3)-D-mannopyranose + N(4)-{alpha-D-Man-(1-&gt;2)-alpha-D-Man-(1-&gt;3)-[alpha-D-Man-(1-&gt;2)-alpha-D-Man-(1-&gt;3)-[alpha-D-Man-(1-&gt;2)-alpha-D-Man-(1-&gt;6)]-alpha-D-Man-(1-&gt;6)]-beta-D-Man-(1-&gt;4)-beta-D-GlaNAc-(1-&gt;4)-beta-D-GlcNAc}-L-asparaginyl-[protein] (N-glucan mannose isomer 8A1,2,3B1,2). This chain is Glycoprotein endo-alpha-1,2-mannosidase (Manea), found in Mus musculus (Mouse).